The sequence spans 427 residues: Peptidase B (427 aa).

Residues K195 and D200 each contribute to the Mn(2+) site. K207 is a catalytic residue. Positions 218, 277, and 279 each coordinate Mn(2+). R281 is a catalytic residue.

It belongs to the peptidase M17 family. As to quaternary structure, homohexamer. The cofactor is Mn(2+).

It is found in the cytoplasm. It carries out the reaction Release of an N-terminal amino acid, Xaa, from a peptide or arylamide. Xaa is preferably Glu or Asp but may be other amino acids, including Leu, Met, His, Cys and Gln.. Probably plays an important role in intracellular peptide degradation. This Salmonella choleraesuis (strain SC-B67) protein is Peptidase B.